We begin with the raw amino-acid sequence, 328 residues long: Phenylalanine--tRNA ligase alpha subunit (328 aa).

E245 serves as a coordination point for Mg(2+).

This sequence belongs to the class-II aminoacyl-tRNA synthetase family. Phe-tRNA synthetase alpha subunit type 1 subfamily. Tetramer of two alpha and two beta subunits. Mg(2+) is required as a cofactor.

The protein localises to the cytoplasm. The catalysed reaction is tRNA(Phe) + L-phenylalanine + ATP = L-phenylalanyl-tRNA(Phe) + AMP + diphosphate + H(+). The sequence is that of Phenylalanine--tRNA ligase alpha subunit from Helicobacter pylori (strain G27).